The chain runs to 511 residues: Exodeoxyribonuclease 7 large subunit (511 aa).

Belongs to the XseA family. In terms of assembly, heterooligomer composed of large and small subunits.

Its subcellular location is the cytoplasm. The enzyme catalyses Exonucleolytic cleavage in either 5'- to 3'- or 3'- to 5'-direction to yield nucleoside 5'-phosphates.. Functionally, bidirectionally degrades single-stranded DNA into large acid-insoluble oligonucleotides, which are then degraded further into small acid-soluble oligonucleotides. In Brucella abortus (strain S19), this protein is Exodeoxyribonuclease 7 large subunit.